Here is a 186-residue protein sequence, read N- to C-terminus: Large ribosomal subunit protein uL5 (186 aa).

Belongs to the universal ribosomal protein uL5 family. As to quaternary structure, part of the 50S ribosomal subunit; part of the 5S rRNA/L5/L18/L25 subcomplex. Contacts the 5S rRNA and the P site tRNA. Forms a bridge to the 30S subunit in the 70S ribosome.

This is one of the proteins that bind and probably mediate the attachment of the 5S RNA into the large ribosomal subunit, where it forms part of the central protuberance. In the 70S ribosome it contacts protein S13 of the 30S subunit (bridge B1b), connecting the 2 subunits; this bridge is implicated in subunit movement. Contacts the P site tRNA; the 5S rRNA and some of its associated proteins might help stabilize positioning of ribosome-bound tRNAs. The chain is Large ribosomal subunit protein uL5 from Karelsulcia muelleri (strain GWSS) (Sulcia muelleri).